Reading from the N-terminus, the 263-residue chain is Pimeloyl-[acyl-carrier protein] methyl ester esterase (263 aa).

Substrate-binding positions include Trp28, 86 to 87, and 149 to 153; these read SL and FLAIQ. Residue Ser86 is the Nucleophile of the active site. Residues Asp213 and His240 contribute to the active site. His240 is a substrate binding site.

This sequence belongs to the AB hydrolase superfamily. Carboxylesterase BioH family. In terms of assembly, monomer.

The protein resides in the cytoplasm. The catalysed reaction is 6-carboxyhexanoyl-[ACP] methyl ester + H2O = 6-carboxyhexanoyl-[ACP] + methanol + H(+). The protein operates within cofactor biosynthesis; biotin biosynthesis. The physiological role of BioH is to remove the methyl group introduced by BioC when the pimeloyl moiety is complete. It allows to synthesize pimeloyl-ACP via the fatty acid synthetic pathway through the hydrolysis of the ester bonds of pimeloyl-ACP esters. This Shewanella oneidensis (strain ATCC 700550 / JCM 31522 / CIP 106686 / LMG 19005 / NCIMB 14063 / MR-1) protein is Pimeloyl-[acyl-carrier protein] methyl ester esterase.